The chain runs to 343 residues: Tetraacyldisaccharide 4'-kinase (343 aa).

55-62 provides a ligand contact to ATP; it reads TVGGEGKT.

The protein belongs to the LpxK family.

The catalysed reaction is a lipid A disaccharide + ATP = a lipid IVA + ADP + H(+). Its pathway is glycolipid biosynthesis; lipid IV(A) biosynthesis; lipid IV(A) from (3R)-3-hydroxytetradecanoyl-[acyl-carrier-protein] and UDP-N-acetyl-alpha-D-glucosamine: step 6/6. Its function is as follows. Transfers the gamma-phosphate of ATP to the 4'-position of a tetraacyldisaccharide 1-phosphate intermediate (termed DS-1-P) to form tetraacyldisaccharide 1,4'-bis-phosphate (lipid IVA). The sequence is that of Tetraacyldisaccharide 4'-kinase from Chelativorans sp. (strain BNC1).